Here is a 486-residue protein sequence, read N- to C-terminus: Protein nucleotidyltransferase YdiU (486 aa).

ATP contacts are provided by G90, G92, R93, K113, D125, G126, R176, and R183. D252 (proton acceptor) is an active-site residue. Positions 253 and 262 each coordinate Mg(2+). D262 serves as a coordination point for ATP.

It belongs to the SELO family. Requires Mg(2+) as cofactor. It depends on Mn(2+) as a cofactor.

It carries out the reaction L-seryl-[protein] + ATP = 3-O-(5'-adenylyl)-L-seryl-[protein] + diphosphate. The enzyme catalyses L-threonyl-[protein] + ATP = 3-O-(5'-adenylyl)-L-threonyl-[protein] + diphosphate. The catalysed reaction is L-tyrosyl-[protein] + ATP = O-(5'-adenylyl)-L-tyrosyl-[protein] + diphosphate. It catalyses the reaction L-histidyl-[protein] + UTP = N(tele)-(5'-uridylyl)-L-histidyl-[protein] + diphosphate. It carries out the reaction L-seryl-[protein] + UTP = O-(5'-uridylyl)-L-seryl-[protein] + diphosphate. The enzyme catalyses L-tyrosyl-[protein] + UTP = O-(5'-uridylyl)-L-tyrosyl-[protein] + diphosphate. Functionally, nucleotidyltransferase involved in the post-translational modification of proteins. It can catalyze the addition of adenosine monophosphate (AMP) or uridine monophosphate (UMP) to a protein, resulting in modifications known as AMPylation and UMPylation. This Pseudomonas putida (strain ATCC 47054 / DSM 6125 / CFBP 8728 / NCIMB 11950 / KT2440) protein is Protein nucleotidyltransferase YdiU.